The following is a 319-amino-acid chain: Methionyl-tRNA formyltransferase (319 aa).

Residue 113–116 (SLLP) participates in (6S)-5,6,7,8-tetrahydrofolate binding.

The protein belongs to the Fmt family.

The catalysed reaction is L-methionyl-tRNA(fMet) + (6R)-10-formyltetrahydrofolate = N-formyl-L-methionyl-tRNA(fMet) + (6S)-5,6,7,8-tetrahydrofolate + H(+). Functionally, attaches a formyl group to the free amino group of methionyl-tRNA(fMet). The formyl group appears to play a dual role in the initiator identity of N-formylmethionyl-tRNA by promoting its recognition by IF2 and preventing the misappropriation of this tRNA by the elongation apparatus. The protein is Methionyl-tRNA formyltransferase of Pseudomonas fluorescens (strain Pf0-1).